A 470-amino-acid polypeptide reads, in one-letter code: Uronate isomerase (470 aa).

The protein belongs to the metallo-dependent hydrolases superfamily. Uronate isomerase family.

The enzyme catalyses D-glucuronate = D-fructuronate. The catalysed reaction is aldehydo-D-galacturonate = keto-D-tagaturonate. It functions in the pathway carbohydrate metabolism; pentose and glucuronate interconversion. In Salmonella heidelberg (strain SL476), this protein is Uronate isomerase.